A 545-amino-acid chain; its full sequence is MVTIVLNKYKLLDKIHIGQQKLEDLLFNLKSEVKPIDENNIEIEINADRLDLLSSDGIARAIKGLLEKELGEAKYNVTDTEYTLIVDNVRTRPYALAAVVYNAKIDLEELIQFQEKLHGTIGRKRKKVAIGIHDLRKVDSKTIEYKEVPLSYKFVPLYENKELTISEILEKTEQGKLYGNISIANGVSPAIVQDDGEVLSIPPIINSNKTRLDENTKDFFIDVTGTSFEAVAQTLDIIVSNLAEAGGTIGRVKVLKSANFSQLSSPLFLHKIQNVREEYVKKILGIKTSKEEICKHVMRMRMNCDIENGVIRVTVPQYRVDILNEIDVVEDIAMSIGYNNLEPSKYISTNYGSYDYMTLLERKIRELGIGAGYVEISNFVLIKDEKLFSNKYVKILNPVTDEYNAVRNSLIPGLLDFLSKNQHAKFPIRVFETGDVVVYDSSTDTGFRNDKRAAYAIMDNKVSYEDIQAPIHYILKSLGLEVNYKEENNNIFIEGRSASIFYENEKMGVIGEVNPDVLIRFGIEYPAVIAELYISEIAKRLTNQR.

Residues 268–343 (FLHKIQNVRE…MSIGYNNLEP (76 aa)) enclose the B5 domain. The Mg(2+) site is built by Asp-321, Asp-327, Glu-330, and Asp-331.

The protein belongs to the phenylalanyl-tRNA synthetase beta subunit family. Type 2 subfamily. As to quaternary structure, tetramer of two alpha and two beta subunits. Mg(2+) is required as a cofactor.

It localises to the cytoplasm. It catalyses the reaction tRNA(Phe) + L-phenylalanine + ATP = L-phenylalanyl-tRNA(Phe) + AMP + diphosphate + H(+). This is Phenylalanine--tRNA ligase beta subunit from Saccharolobus islandicus (strain M.14.25 / Kamchatka #1) (Sulfolobus islandicus).